The chain runs to 710 residues: Probable inactive DNA (cytosine-5)-methyltransferase DRM3 (710 aa).

Residues 1–21 are disordered; the sequence is MADMRRRNGSGGSSNHERNEQ. The region spanning 52–92 is the UBA 1 domain; sequence SGSNVKSLLIEMGFCPTLVQKAIDENGQDDFELLLEILTKS. The span at 167 to 184 shows a compositional bias: acidic residues; it reads ESEDSLDGAEINEEDEDV. Positions 167–192 are disordered; it reads ESEDSLDGAEINEEDEDVTPVTARGP. The region spanning 198–242 is the UBA 2 domain; it reads QLFETMDKTLRLLEMGFSNDEISMAIEKIGTKGQISVLAESIVTG. The segment at 282–360 is disordered; the sequence is AQKEDGGGGS…MGDSSSFMET (79 aa). Residues 339 to 350 are compositionally biased toward basic and acidic residues; the sequence is YDDRGKRLRPED. The SAM-dependent MTase DRM-type domain occupies 379-710; sequence QPRLSQSLGP…RVTKRVRDMM (332 aa).

The protein belongs to the class I-like SAM-binding methyltransferase superfamily. DRM-methyltransferase family. As to quaternary structure, interacts with Pol V.

It is found in the nucleus. Functionally, catalytically inactive DNA methyltransferase that acts as regulatory factor for DRM2-mediated DNA methylation. Required for maintenance of non-CpG DNA methylation. Required for normal establishment and maintenance of RNA-directed DNA methylation (RdDM) and accumulation of specific repeat-associated small interfering RNAs (siRNAs). Required for nucleolus organizer region (NOR) nuclear organization during interphase. Acts downstream of the production of siRNAs. May promote RNA polymerase V (Pol V) transcriptional elongation or assist in the stabilization of Pol V transcripts. The polypeptide is Probable inactive DNA (cytosine-5)-methyltransferase DRM3 (Arabidopsis thaliana (Mouse-ear cress)).